The primary structure comprises 569 residues: Putative diguanylate cyclase DgcQ (569 aa).

The next 2 helical transmembrane spans lie at 25–45 and 365–385; these read LGPG…STLL and IALT…WYVI. Positions 433–568 constitute a GGDEF domain; sequence HPFSVIQVDL…GRNRVFASDN (136 aa). Aspartate 441 contacts Mg(2+). Substrate-binding residues include asparagine 449, histidine 454, and aspartate 458. Glutamate 484 is a Mg(2+) binding site. Glutamate 484 acts as the Proton acceptor in catalysis.

As to quaternary structure, homodimer. Mg(2+) serves as cofactor.

The protein resides in the cell inner membrane. It catalyses the reaction 2 GTP = 3',3'-c-di-GMP + 2 diphosphate. The protein operates within glycan metabolism; bacterial cellulose biosynthesis. It participates in purine metabolism; 3',5'-cyclic di-GMP biosynthesis. Functionally, catalyzes the synthesis of cyclic-di-GMP (c-di-GMP) via the condensation of 2 GTP molecules. Cyclic-di-GMP is a second messenger which controls cell surface-associated traits in bacteria. Involved in the regulation of cellulose production. In Shigella flexneri, this protein is Putative diguanylate cyclase DgcQ.